Reading from the N-terminus, the 450-residue chain is MRKLWAPNWLSAKRHHANQAATRLIGRHALMAWLAAALALSAGAAQAQLNVEISGVGASQIPVATANFQGEAQAPQNLTAIIRSDLARSGRLRNVDPGGATVAESANVDLGSWKSRGADAFVAGSVTPSGNGQYEVRFRLYDTVKGQSLGGLAFNVNQGQLRVTAHKIADYIYEKLLGERGVFATRLSYVSRVGGRYQLLISDSDGQNSQVALTSNEPIISPSWSPDGRRVAYVSFEAKKPVVYVHDLATGKRTLVSNQKGNNSAPSWSPDGQHLAVALSRDGNTQVYQVNADGSGIRRLTRSSAIDTEPQYSPDGKSIYFTSDRGGAPQVYRMPAGGEEAGSAQRVTFKGSYNVSPRISPDGKYLAYITRSGGFKLQLQDLTNGDVTSLTDTSNDEAPSFAANGKYILYATRVGGRSVLAAVSTDGRTRQVLSLQSGDVREPSWGPFMQ.

A signal peptide spans 1–47; the sequence is MRKLWAPNWLSAKRHHANQAATRLIGRHALMAWLAAALALSAGAAQA.

Belongs to the TolB family. The Tol-Pal system is composed of five core proteins: the inner membrane proteins TolA, TolQ and TolR, the periplasmic protein TolB and the outer membrane protein Pal. They form a network linking the inner and outer membranes and the peptidoglycan layer.

It localises to the periplasm. Part of the Tol-Pal system, which plays a role in outer membrane invagination during cell division and is important for maintaining outer membrane integrity. The protein is Tol-Pal system protein TolB of Cupriavidus pinatubonensis (strain JMP 134 / LMG 1197) (Cupriavidus necator (strain JMP 134)).